The primary structure comprises 935 residues: ABC transporter A family member 7 (935 aa).

7 consecutive transmembrane segments (helical) span residues 34 to 54, 338 to 358, 392 to 412, 424 to 444, 454 to 474, 483 to 503, and 528 to 548; these read LIMIPFYLCILLVIIQILFDT, IASLIGPLFFTWVILLLFPVI, FLTISVLYVICLMIFGSAIGL, FVFYFLYLNLQIALAFLVSSV, ASYIYVFGSGLLGLFLLNFLI, WIIVMELYPGFSLYRGLYELA, and DDVFYIIVVEWFLALIAAYYI. Positions 571–591 are disordered; sequence SLRRPSLQRQGSKVSVDMEKP. An ABC transporter domain is found at 613-850; the sequence is IVCDNLKKVY…YGGSYVFTMT (238 aa). 651-658 contacts ATP; it reads GPNGAGKT.

Belongs to the ABC transporter superfamily. ABCA family. CPR flippase (TC 3.A.1.211) subfamily.

It is found in the membrane. The protein is ABC transporter A family member 7 (ABCA7) of Arabidopsis thaliana (Mouse-ear cress).